A 316-amino-acid polypeptide reads, in one-letter code: Coiled-coil domain-containing protein 130 homolog (316 aa).

Residues 182 to 203 (ANSRLRAEFRQQKKEINGQQEL) are a coiled coil. The segment at 287 to 316 (KLEETTSSATNEKPISLVGDYSSSDNDSNG) is disordered.

This sequence belongs to the CWC16 family.

The chain is Coiled-coil domain-containing protein 130 homolog from Drosophila melanogaster (Fruit fly).